Here is a 473-residue protein sequence, read N- to C-terminus: Photosystem II CP43 reaction center protein (473 aa).

The propeptide occupies 1–14 (MKTLYSPRRFYPVE). Residue T15 is modified to N-acetylthreonine. Residue T15 is modified to Phosphothreonine. 5 consecutive transmembrane segments (helical) span residues 69–93 (LFEVAHFIPEKPMYEQGLILLPHLA), 134–155 (LIGPETLEESFPFFGYAWKDRN), 178–200 (KALFFGGIYDTWAPGGGDVRKIT), 255–275 (KPFAWTRRAFVWSGEAYLSYS), and 291–312 (WFNNTAYPSEFYGPTGPEASQA). E367 serves as a coordination point for [CaMn4O5] cluster. The helical transmembrane segment at 447-471 (RARAAAAGFEKGIDRDLEPVLFMTP) threads the bilayer.

This sequence belongs to the PsbB/PsbC family. PsbC subfamily. As to quaternary structure, PSII is composed of 1 copy each of membrane proteins PsbA, PsbB, PsbC, PsbD, PsbE, PsbF, PsbH, PsbI, PsbJ, PsbK, PsbL, PsbM, PsbT, PsbX, PsbY, PsbZ, Psb30/Ycf12, at least 3 peripheral proteins of the oxygen-evolving complex and a large number of cofactors. It forms dimeric complexes. Binds multiple chlorophylls and provides some of the ligands for the Ca-4Mn-5O cluster of the oxygen-evolving complex. It may also provide a ligand for a Cl- that is required for oxygen evolution. PSII binds additional chlorophylls, carotenoids and specific lipids. is required as a cofactor.

The protein resides in the plastid. Its subcellular location is the chloroplast thylakoid membrane. Functionally, one of the components of the core complex of photosystem II (PSII). It binds chlorophyll and helps catalyze the primary light-induced photochemical processes of PSII. PSII is a light-driven water:plastoquinone oxidoreductase, using light energy to abstract electrons from H(2)O, generating O(2) and a proton gradient subsequently used for ATP formation. The polypeptide is Photosystem II CP43 reaction center protein (Welwitschia mirabilis (Tree tumbo)).